The primary structure comprises 340 residues: DNA-directed RNA polymerase subunit alpha (340 aa).

Residues Met1–Glu236 form an alpha N-terminal domain (alpha-NTD) region. Residues Phe251–Asn340 are alpha C-terminal domain (alpha-CTD).

This sequence belongs to the RNA polymerase alpha chain family. As to quaternary structure, homodimer. The RNAP catalytic core consists of 2 alpha, 1 beta, 1 beta' and 1 omega subunit. When a sigma factor is associated with the core the holoenzyme is formed, which can initiate transcription.

The catalysed reaction is RNA(n) + a ribonucleoside 5'-triphosphate = RNA(n+1) + diphosphate. In terms of biological role, DNA-dependent RNA polymerase catalyzes the transcription of DNA into RNA using the four ribonucleoside triphosphates as substrates. The chain is DNA-directed RNA polymerase subunit alpha from Rickettsia typhi (strain ATCC VR-144 / Wilmington).